The primary structure comprises 412 residues: Tyrosine--tRNA ligase (412 aa).

Position 31 (Tyr31) interacts with L-tyrosine. Positions 36-45 (PTAPSLHIGH) match the 'HIGH' region motif. L-tyrosine-binding residues include Tyr162 and Gln166. Residues 222–226 (KIGKT) carry the 'KMSKS' region motif. Position 225 (Lys225) interacts with ATP. An S4 RNA-binding domain is found at 345 to 412 (KRWLDVVVQL…KKKKQVIDLN (68 aa)).

This sequence belongs to the class-I aminoacyl-tRNA synthetase family. TyrS type 1 subfamily. As to quaternary structure, homodimer.

The protein resides in the cytoplasm. It catalyses the reaction tRNA(Tyr) + L-tyrosine + ATP = L-tyrosyl-tRNA(Tyr) + AMP + diphosphate + H(+). Its function is as follows. Catalyzes the attachment of tyrosine to tRNA(Tyr) in a two-step reaction: tyrosine is first activated by ATP to form Tyr-AMP and then transferred to the acceptor end of tRNA(Tyr). In Chlamydia muridarum (strain MoPn / Nigg), this protein is Tyrosine--tRNA ligase.